An 84-amino-acid chain; its full sequence is Polcalcin Ole e 3 (84 aa).

2 consecutive EF-hand domains span residues 6–40 (QEVAEHERIFKRFDANGDGKISSSELGETLKTLGS) and 41–76 (VTPEEIQRMMAEIDTDGDGFISFEEFTVFARANRGL). Ca(2+) is bound by residues D19, N21, D23, K25, E30, D54, D56, D58, and E65.

Expressed exclusively in mature pollen.

Its subcellular location is the endomembrane system. The chain is Polcalcin Ole e 3 (OLE3) from Olea europaea (Common olive).